The following is a 317-amino-acid chain: Orange carotenoid-binding protein (317 aa).

One can recognise an OCP N-terminal domain in the interval 18 to 169 (ADVVPATIAR…DMGFTAGKDG (152 aa)). Echinenone-binding positions include 34 to 38 (EDQLA), 37 to 44 (LALIWFAY), 80 to 83 (TQAM), 107 to 117 (LGFWYRLGELM), 125 to 129 (IPAGY), 151 to 161 (ITVLRNAVVDM), Tyr201, 245 to 250 (CQNLKL), 273 to 284 (VQTPWFGGNVGM), and Trp288.

The protein belongs to the orange carotenoid-binding protein family. In terms of assembly, monomer. Interacts with the APC core of the phycobilisome (PB), probably at a ratio of 1:1 in a light-independent manner; possibly only OCP-R binds to PBs. Interacts with FRP. Detachment from PBs is accelerated by FPR. 3'-hydroxyechinenone is required as a cofactor. In terms of processing, proteolytically cleaved into a red 16.7 kDa form named red carotenoid-binding protein (RCP) which lacks 15 residues from the N-terminus and approximately 150 residues from the C-terminus.

It is found in the cellular thylakoid membrane. In terms of biological role, acts as a blue-light photoreceptor and photo-protectant. Essential for inhibiting damaged induced by excess blue-green light via a process known as non-photochemical quenching (NPQ). In the dark or dim light the stable inactive form (OCP-O) is orange, upon illumination with blue-green light it converts to a metastable active red form (OCP-R), inducing energy dissipation, quenching cellular fluorescence via NPQ. One OCP-R molecule is sufficient to quench 1 phycobilisome. More OCP-R accumulates under high-light and low temperature; in the dark OCP-R spontaneously reverts to OCP-O. Reversion of OCP-O is accelerated by FRP. A kinetic study suggests conversion of OCP-O to OCP-R is limited by cis-trans proline isomerization of either Gln224-Pro225 or Pro225-Pro226. This chain is Orange carotenoid-binding protein, found in Synechocystis sp. (strain ATCC 27184 / PCC 6803 / Kazusa).